The chain runs to 240 residues: Sec-independent protein translocase protein TatC (240 aa).

6 helical membrane passes run 15-35, 61-81, 103-123, 152-172, 191-211, and 212-232; these read IISI…AKYV, LFIL…PVIL, LLLG…FIVL, FVLK…VLYV, FIVI…TQVL, and MAIP…LATR.

Belongs to the TatC family. As to quaternary structure, forms a complex with TatA.

The protein resides in the cell inner membrane. Part of the twin-arginine translocation (Tat) system that transports large folded proteins containing a characteristic twin-arginine motif in their signal peptide across membranes. This is Sec-independent protein translocase protein TatC from Aquifex aeolicus (strain VF5).